The following is a 100-amino-acid chain: Small ribosomal subunit protein uS14c (100 aa).

This sequence belongs to the universal ribosomal protein uS14 family. As to quaternary structure, part of the 30S ribosomal subunit.

The protein resides in the plastid. Its subcellular location is the chloroplast. Its function is as follows. Binds 16S rRNA, required for the assembly of 30S particles. The polypeptide is Small ribosomal subunit protein uS14c (Nasturtium officinale (Watercress)).